The chain runs to 281 residues: Probable ABC transporter ATP-binding protein AZC_3926 (281 aa).

Positions Met-1–Pro-38 are disordered. Residues Leu-45–Glu-277 form the ABC transporter domain. Gly-77–Thr-84 contributes to the ATP binding site.

This sequence belongs to the ABC transporter superfamily.

This is Probable ABC transporter ATP-binding protein AZC_3926 from Azorhizobium caulinodans (strain ATCC 43989 / DSM 5975 / JCM 20966 / LMG 6465 / NBRC 14845 / NCIMB 13405 / ORS 571).